A 276-amino-acid chain; its full sequence is Formamidopyrimidine-DNA glycosylase (276 aa).

The active-site Schiff-base intermediate with DNA is the proline 2. Catalysis depends on glutamate 3, which acts as the Proton donor. Lysine 58 serves as the catalytic Proton donor; for beta-elimination activity. The DNA site is built by histidine 92, arginine 111, and arginine 154. The FPG-type zinc-finger motif lies at 239–273 (HAYQRTGDPCERCGTPIQRIVVGQRGTHFCPKCQV). The active-site Proton donor; for delta-elimination activity is arginine 263.

The protein belongs to the FPG family. Monomer. The cofactor is Zn(2+).

It catalyses the reaction Hydrolysis of DNA containing ring-opened 7-methylguanine residues, releasing 2,6-diamino-4-hydroxy-5-(N-methyl)formamidopyrimidine.. The catalysed reaction is 2'-deoxyribonucleotide-(2'-deoxyribose 5'-phosphate)-2'-deoxyribonucleotide-DNA = a 3'-end 2'-deoxyribonucleotide-(2,3-dehydro-2,3-deoxyribose 5'-phosphate)-DNA + a 5'-end 5'-phospho-2'-deoxyribonucleoside-DNA + H(+). Its function is as follows. Involved in base excision repair of DNA damaged by oxidation or by mutagenic agents. Acts as a DNA glycosylase that recognizes and removes damaged bases. Has a preference for oxidized purines, such as 7,8-dihydro-8-oxoguanine (8-oxoG). Has AP (apurinic/apyrimidinic) lyase activity and introduces nicks in the DNA strand. Cleaves the DNA backbone by beta-delta elimination to generate a single-strand break at the site of the removed base with both 3'- and 5'-phosphates. The chain is Formamidopyrimidine-DNA glycosylase from Ligilactobacillus salivarius (strain UCC118) (Lactobacillus salivarius).